A 521-amino-acid chain; its full sequence is uncharacterized protein (521 aa).

The N-terminal stretch at 1 to 22 (MGFKLKGFGFLTLFASQAFLTA) is a signal peptide. Cys-23 carries the N-palmitoyl cysteine lipid modification. Cys-23 carries S-diacylglycerol cysteine lipidation.

The protein belongs to the MG067/MG068/MG395 family.

The protein localises to the cell membrane. This is an uncharacterized protein from Mycoplasma pneumoniae (strain ATCC 29342 / M129 / Subtype 1) (Mycoplasmoides pneumoniae).